We begin with the raw amino-acid sequence, 358 residues long: MVPVLKKYKAAAVNAEPGWFDLQESVRRTIHWIDEAGKAGCKLIAFPELWIPGYPYWAWKVNYQESLPLLKKYRENSLPSDSDEMRRIREAAKANKIWVSLGYSELDLASLYTTQIMISPAGDVINHRRKIKATHVERLVFGDGTGDTTESVMDTEIGRIGHLNCWENMNPFLKAYAASLGEQVHIAAWPLYPGKETLKYPDPYTNVAEANADLVTPAYAIETGSFTLAPWQTITAEGIKLNTPPGKELEDPNIYNGNGRIFGPDGQNLVPHPDKDFQGLLFVDIDLDEIHLTKSLADFGGHYMRPDLIRLLVDTNRKDLVVHEDRVNGGVAYTRTIDRVGLSAPLDASATEAQSESV.

Residues 8 to 287 form the CN hydrolase domain; that stretch reads YKAAAVNAEP…QGLLFVDIDL (280 aa). The active-site Proton acceptor is the E48. Residue K130 is part of the active site. C165 acts as the Nucleophile in catalysis.

The protein belongs to the carbon-nitrogen hydrolase superfamily. Nitrilase family. Oligomer of dimers, forming left-handed helical fibers.

The catalysed reaction is formamide = hydrogen cyanide + H2O. Its function is as follows. Catalyzes the hydration of cyanide to formamide. Degradation of cyanide may be important for plant pathogenic fungi in infection of cyanogenic plants. The protein is Cyanide hydratase of Penicillium rubens (strain ATCC 28089 / DSM 1075 / NRRL 1951 / Wisconsin 54-1255) (Penicillium chrysogenum).